Here is a 124-residue protein sequence, read N- to C-terminus: Con-Ins Tx1 (124 aa).

An N-terminal signal peptide occupies residues 1–24 (MTTSSYFLLVALGLLLYVFQSSFG). 4 cysteine pairs are disulfide-bonded: Cys-29–Cys-107, Cys-41–Cys-110, Cys-53–Cys-123, and Cys-109–Cys-114. 4-hydroxyproline; partial is present on Pro-34. The propeptide at 59–92 (EQGGANNARANTGRTSSLMKRRGFLSLLKKRGKR) is c peptide. The residue at position 118 (Glu-118) is a 4-carboxyglutamate; partial.

This sequence belongs to the insulin family. As to quaternary structure, heterodimer of A and B chains; disulfide-linked. In terms of tissue distribution, expressed by the venom gland.

The protein resides in the secreted. This venom insulin facilitates prey capture by rapidly inducing hypoglycemic shock. Intraperitoneal injection of this peptide into zebrafish lowers blood glucose with the same potency than human insulin. In vivo, when applied to water, this peptide reduces overall locomotor activity of zebrafish larvae, observed as a significant decrease in the percentage of time spent swimming and movement frequency. The protein is Con-Ins Tx1 of Conus textile (Cloth-of-gold cone).